A 322-amino-acid polypeptide reads, in one-letter code: MEKNKLDQLKSMTTIVIDTGDIEAIKEYSPTDATTNPSLILSAVEKPAYKPLMEEAYHYSQKAKSSGEQISLFLDKLFVNVGCEILKLIPGRVSTEVDARLSFDVEGSIQKAQSLIALYKEMGIEKERILIKLASTWEGGLAAKQLEKMGIHCNMTLLFSMPQAIHCAEAQATLISPFVGRILDWYKKHDNVPGYAPAEDPGVKSVTTIYHYFKKFSYKTQIMGASFRNKEEILELAGCDLLTISPHFLQELHDASGNVEQKLDAAKSKQLNIEPIKMNEKAFRLALNDDAMATEKLSEGIRNFAKDAQKLEKMLRTTYKIG.

The active-site Schiff-base intermediate with substrate is the K132.

Belongs to the transaldolase family. Type 1 subfamily. In terms of assembly, homodimer.

The protein localises to the cytoplasm. The catalysed reaction is D-sedoheptulose 7-phosphate + D-glyceraldehyde 3-phosphate = D-erythrose 4-phosphate + beta-D-fructose 6-phosphate. It functions in the pathway carbohydrate degradation; pentose phosphate pathway; D-glyceraldehyde 3-phosphate and beta-D-fructose 6-phosphate from D-ribose 5-phosphate and D-xylulose 5-phosphate (non-oxidative stage): step 2/3. Its function is as follows. Transaldolase is important for the balance of metabolites in the pentose-phosphate pathway. This is Transaldolase from Protochlamydia amoebophila (strain UWE25).